Consider the following 199-residue polypeptide: Thymidylate kinase (199 aa).

Residue 7–14 (GIDGSGKS) participates in ATP binding.

It belongs to the thymidylate kinase family.

It carries out the reaction dTMP + ATP = dTDP + ADP. Phosphorylation of dTMP to form dTDP in both de novo and salvage pathways of dTTP synthesis. This chain is Thymidylate kinase, found in Thermosipho melanesiensis (strain DSM 12029 / CIP 104789 / BI429).